Reading from the N-terminus, the 857-residue chain is MQEQYNPQDIEQKVQKHWDDNKTFVVSEDPNKEKFYCLSMFPYPSGRLHMGHVRNYTIGDVVSRFQRLQGKNVMQPIGWDAFGLPAENAAVKNNTAPAPWTYENIEYMKNQLKLLGFGYDWNREFATCTPEYYRWEQEFFTKLYEKGLVYKKTSSVNWCPNDQTVLANEQVEDGCCWRCDTPVEQKEIPQWFIKITEYAQELLDDLDKLEGWPEMVKTMQRNWIGRSEGVELKFEVKGQQDLEVYTTRPDTLMGVTYVGIAAGHPLATLAAENNPELAAFIEECKNTKVAEAELATMEKKGMATGLTAIHPLNGREVPVYVANFVLMDYGTGAVMAVPAHDQRDFEFATKYGLDIIPVIKPADGSELDISEAAYTEKGVLFDSGEFDGLEFQAAFDAIAAKLEAEGKGTKTVNFRLRDWGVSRQRYWGAPIPMVTTEDGEVHPVPADQLPVILPEDVVMDGVTSPIKADKEWAKTTFNGEPALRETDTFDTFMESSWYYARYCSPQADDILDPEKANYWLPVDQYIGGIEHACMHLLYSRFFHKLLRDAGYVTSDEPFKQLLCQGMVLADAFYFENEKGGKEWVAPTDVAVERDGKGRIISAKDNEGRDVTHSGMIKMSKSKNNGIDPQEMVDKYGADTVRLFMMFASPADMTLEWQESGVEGANRFLKRVWKLVKEHAEKGAAEAVDTAALSGEQKALRRDVHKTIAKVTDDIARRQTFNTAIAAIMELMNKLAKAPQESAQDRAILDEALKAVVTMLYPITPHISYELWTALGESDIDNAAWPTFDEKALVEDEKTIVVQVNGKLRAKLTVAADATKEQVEELGLNDENVTKFTDGLTIRKVIYVPGKLLNIVAN.

A 'HIGH' region motif is present at residues 42–52; sequence PYPSGRLHMGH. The 'KMSKS' region signature appears at 617-621; sequence KMSKS. K620 provides a ligand contact to ATP.

Belongs to the class-I aminoacyl-tRNA synthetase family.

The protein resides in the cytoplasm. It catalyses the reaction tRNA(Leu) + L-leucine + ATP = L-leucyl-tRNA(Leu) + AMP + diphosphate. The chain is Leucine--tRNA ligase from Vibrio parahaemolyticus serotype O3:K6 (strain RIMD 2210633).